Here is a 61-residue protein sequence, read N- to C-terminus: Conotoxin Am14.1 (61 aa).

Propeptides lie at residues 1 to 19 (MLSV…HLPR) and 52 to 61 (KRDLDLFTDQ).

Mostly non-hydroxylated. Post-translationally, contains 2 disulfide bonds. In terms of tissue distribution, expressed by the venom duct.

The protein resides in the secreted. Its function is as follows. Probable toxin that inhibits ion channels. This is Conotoxin Am14.1 from Conus amadis (Amadis cone).